We begin with the raw amino-acid sequence, 707 residues long: Choline transporter-like protein 4 (707 aa).

At 1–33 the chain is on the cytoplasmic side; it reads MGGKQDQDKEAYGKPAKYDPSFRGPIRNRSCTD. A helical membrane pass occupies residues 34-54; that stretch reads IICCVLFFLFILGYIAVGILA. Over 55 to 227 the chain is Extracellular; sequence WVYGDPKQVL…KIFEDFAQSW (173 aa). Asn68, Asn185, and Asn196 each carry an N-linked (GlcNAc...) asparagine glycan. Residues 228–248 form a helical membrane-spanning segment; sequence YWILIALGLALVLSLLFILLL. Residues 249–250 lie on the Cytoplasmic side of the membrane; sequence RL. A helical transmembrane segment spans residues 251–271; sequence VAGPLVFVLIIGVLGVLAYGI. The Extracellular segment spans residues 272 to 307; it reads YHCWEEYRVLRDKGASISQLGFTTNLSAYRNVQETW. A glycan (N-linked (GlcNAc...) asparagine) is linked at Asn296. A helical transmembrane segment spans residues 308–328; it reads LAALIILAVLEGVLLLMLIFL. The Cytoplasmic portion of the chain corresponds to 329–356; sequence RQRICIAIALLKEASRAVGYIMSTMFYP. The helical transmembrane segment at 357–377 threads the bilayer; that stretch reads LVTFALLLVCIAYWAIIALFL. The Extracellular portion of the chain corresponds to 378–452; the sequence is ATSGQPQYVF…AVLGLFWTIN (75 aa). 3 N-linked (GlcNAc...) asparagine glycosylation sites follow: Asn391, Asn403, and Asn413. The helical transmembrane segment at 453-473 threads the bilayer; that stretch reads WVLALGQCVLAGAFASFYWAF. The Cytoplasmic segment spans residues 474 to 498; that stretch reads HKPRDIPTFPLGSAFLRTLRYHTGS. A helical transmembrane segment spans residues 499–519; the sequence is LAFGALILTLVQIARVILEYI. Over 520-557 the chain is Extracellular; that stretch reads DHKLRGAQNPLTRCILCCFKCCLWCLEKFIKFLNRNAY. A helical membrane pass occupies residues 558–578; sequence IMIAIYGKNFCVSAKNAFMLL. The Cytoplasmic segment spans residues 579–594; it reads MRNIVRVVVLDKVTDL. A helical transmembrane segment spans residues 595 to 615; it reads LLFFGKLLVVGGVGVLSFFFF. At 616-635 the chain is on the extracellular side; that stretch reads TGRIPSLGKTFENPQLNYYW. A helical transmembrane segment spans residues 636–656; it reads LPIMVSILGAYLIASGFFSVF. The Cytoplasmic portion of the chain corresponds to 657–707; that stretch reads GMCVDTLFLCFLEDLERNDGSADRPYYMSKSLLKILGKKNKGTPGDKKRKK.

It belongs to the CTL (choline transporter-like) family. N-glycosylated; N-glycosylation of Asn-68 and Asn-391 is required for a proper thiamine pyrophosphate uptake.

It is found in the membrane. The protein localises to the apical cell membrane. It catalyses the reaction choline(out) + n H(+)(in) = choline(in) + n H(+)(out). The catalysed reaction is thiamine diphosphate(out) = thiamine diphosphate(in). Its function is as follows. Choline transporter that plays a role in the choline-acetylcholine system and is required to the efferent innervation of hair cells in the olivocochlear bundle for the maintenance of physiological function of outer hair cells and the protection of hair cells from acoustic injury. Also described as a thiamine pyrophosphate transporter in colon, may mediate the absorption of microbiota-generated thiamine pyrophosphate and contribute to host thiamine (vitamin B1) homeostasis. The sequence is that of Choline transporter-like protein 4 from Bos taurus (Bovine).